Consider the following 539-residue polypeptide: Propionyl-CoA carboxylase beta chain, mitochondrial (539 aa).

The N-terminal 28 residues, 1 to 28 (MAAAVRVTAARARLRVVVRSLHAGVRSL), are a transit peptide targeting the mitochondrion. Positions 32-290 (PVSVNERIEN…SNQDPAPIRE (259 aa)) constitute a CoA carboxyltransferase N-terminal domain. Residues 32–533 (PVSVNERIEN…SKKVQRPWRK (502 aa)) form a carboxyltransferase region. Phosphoserine is present on S71. An N6-acetyllysine; alternate modification is found at K99. K99 bears the N6-succinyllysine; alternate mark. The region spanning 294 to 533 (PSDRLVPELD…SKKVQRPWRK (240 aa)) is the CoA carboxyltransferase C-terminal domain. The acyl-CoA binding stretch occupies residues 325–358 (DERDFFEIMPNYAKNIIVGFARMNGRTVGIVGNQ). 2 positions are modified to N6-acetyllysine; alternate: K474 and K489. An N6-succinyllysine; alternate mark is found at K474 and K489.

It belongs to the AccD/PCCB family. The holoenzyme is a dodecamer composed of 6 PCCA/alpha subunits and 6 PCCB/beta subunits.

Its subcellular location is the mitochondrion matrix. The catalysed reaction is propanoyl-CoA + hydrogencarbonate + ATP = (S)-methylmalonyl-CoA + ADP + phosphate + H(+). It catalyses the reaction butanoyl-CoA + hydrogencarbonate + ATP = (2S)-ethylmalonyl-CoA + ADP + phosphate + H(+). It functions in the pathway metabolic intermediate metabolism; propanoyl-CoA degradation; succinyl-CoA from propanoyl-CoA: step 1/3. This is one of the 2 subunits of the biotin-dependent propionyl-CoA carboxylase (PCC), a mitochondrial enzyme involved in the catabolism of odd chain fatty acids, branched-chain amino acids isoleucine, threonine, methionine, and valine and other metabolites. Propionyl-CoA carboxylase catalyzes the carboxylation of propionyl-CoA/propanoyl-CoA to D-methylmalonyl-CoA/(S)-methylmalonyl-CoA. Within the holoenzyme, the alpha subunit catalyzes the ATP-dependent carboxylation of the biotin carried by the biotin carboxyl carrier (BCC) domain, while the beta subunit then transfers the carboxyl group from carboxylated biotin to propionyl-CoA. Propionyl-CoA carboxylase also significantly acts on butyryl-CoA/butanoyl-CoA, which is converted to ethylmalonyl-CoA/(2S)-ethylmalonyl-CoA at a much lower rate. Other alternative minor substrates include (2E)-butenoyl-CoA/crotonoyl-CoA. The chain is Propionyl-CoA carboxylase beta chain, mitochondrial from Sus scrofa (Pig).